Consider the following 429-residue polypeptide: MAAVAVVGGQWGDEGKGKITDFLSKDATMAVRSNGGNNAGHTIDIDGKEFKMRLIPSGIFAASKAAVIGNGVVINPEVMFGELDNLEKNGIDTSKLRISNRAHIIMPYDVKQDEYQEEAKGDRKIGTTKNGIGPTYMDKASRIGIRVCDLLEKDTFEEKLRLNLKVKNELFTKVYGKPALKLEDIFDKYYEYGQKMKKYVTDTSVLVNDALDNGEKVLFEGAQGTMLDIDEGTYPYVTSSNTISGGICSGIGMGANRLNTVIGVCKAYTTRVGEGPFPTELLDEVGDRIRDTAHEYGTVTGRPRRVGWFDSVALRHAKRVSGINGLSLNLLDVFSGFDKIKICTAYELDGKKIEYYPASLKELYRCKPVYEELPAWEEDITAAKKLDDLPENAQKFLNRVSELVGVPLVTVSVGPDREQTIVLKNPWER.

GTP-binding positions include 12–18 and 40–42; these read GDEGKGK and GHT. Residue Asp13 is the Proton acceptor of the active site. Residues Asp13 and Gly40 each coordinate Mg(2+). IMP is bound by residues 13-16, 38-41, Thr128, Arg142, Gln223, Thr238, and Arg302; these read DEGK and NAGH. His41 functions as the Proton donor in the catalytic mechanism. 298–304 is a binding site for substrate; it reads TVTGRPR. GTP contacts are provided by residues Arg304, 330–332, and 412–414; these read LLD and SVG.

It belongs to the adenylosuccinate synthetase family. Homodimer. Requires Mg(2+) as cofactor.

The protein localises to the cytoplasm. It carries out the reaction IMP + L-aspartate + GTP = N(6)-(1,2-dicarboxyethyl)-AMP + GDP + phosphate + 2 H(+). It functions in the pathway purine metabolism; AMP biosynthesis via de novo pathway; AMP from IMP: step 1/2. In terms of biological role, plays an important role in the de novo pathway of purine nucleotide biosynthesis. Catalyzes the first committed step in the biosynthesis of AMP from IMP. The chain is Adenylosuccinate synthetase from Lactobacillus helveticus (strain DPC 4571).